The primary structure comprises 375 residues: MKILVDENMPYAQQLFCQLGEVKAVPGRPLPIEELDDTDALMVRSITKVNASLLAGKPVKFVGTATAGFDHVDTAWLEQQKIAFSSAPGCNAIAVVEYVFSALMVFAEQEGFQLTDKTVGIVGVGNVGGRLAKRLRALGVNVLLCDPPRADRGDDEQFHSLETLLKQADILTFHTPLNKSGRYNSYHLINESNLDILPEGRILINASRGEVIDNAALLSALNQGKKLRVVLDVWEPEPDLSLELLNKVDIATPHIAGYTLEGKARGTTQVYEAYCDFIGQPQHVELSTLLPKPLISTISVQGELTQTLLKQLIHLVYDVRRDDAPLRKVAGIKGEFDKLRKFYPVRREWSSLQVVCDNPTTASLLNAIGFNATHK.

Substrate is bound by residues serine 45 and threonine 66. Residues aspartate 146, threonine 175, alanine 206–arginine 208, and aspartate 232 contribute to the NAD(+) site. The active site involves arginine 208. Glutamate 237 is a catalytic residue. The active-site Proton donor is histidine 254. Glycine 257 serves as a coordination point for NAD(+). Residue tyrosine 258 coordinates substrate.

It belongs to the D-isomer specific 2-hydroxyacid dehydrogenase family. PdxB subfamily. In terms of assembly, homodimer.

The protein localises to the cytoplasm. The enzyme catalyses 4-phospho-D-erythronate + NAD(+) = (R)-3-hydroxy-2-oxo-4-phosphooxybutanoate + NADH + H(+). It participates in cofactor biosynthesis; pyridoxine 5'-phosphate biosynthesis; pyridoxine 5'-phosphate from D-erythrose 4-phosphate: step 2/5. In terms of biological role, catalyzes the oxidation of erythronate-4-phosphate to 3-hydroxy-2-oxo-4-phosphonooxybutanoate. The protein is Erythronate-4-phosphate dehydrogenase of Proteus mirabilis (strain HI4320).